The chain runs to 107 residues: Theromyzin (107 aa).

The signal sequence occupies residues 1-21; that stretch reads MHAKIILALFLGMTAFLAVQA.

As to expression, coelomic liquid (at protein level). Expressed in large fat cells in contact with coelomic cavities, in intestinal epithelia and at the epidermis level.

It is found in the secreted. Has bacteriostatic activity against M.luteus. No activity toward E.coli and F.oxysporum. This chain is Theromyzin, found in Theromyzon tessulatum (Duck leech).